Reading from the N-terminus, the 316-residue chain is MDSRIFLAFSLCFLFTLPLISSAPNRFLTRSSNTRDGSVIKMKTSASSFGFDPTRVTQLSWTPRVFLYEGFLSDEECDHFIKLAKGKLEKSMVADNDSGESVESEVRTSSGMFLSKRQDDIVSNVEAKLAAWTFLPEENGESMQILHYENGQKYEPHFDYFHDQANLELGGHRIATVLMYLSNVEKGGETVFPMWKGKATQLKDDSWTECAKQGYAVKPRKGDALLFFNLHPNATTDSNSLHGSCPVVEGEKWSATRWIHVKSFERAFNKQSGCMDENVSCEKWAKAGECQKNPTYMVGSDKDHGYCRKSCKACSS.

The Cytoplasmic segment spans residues 1–4 (MDSR). Residues 5 to 24 (IFLAFSLCFLFTLPLISSAP) traverse the membrane as a helical; Signal-anchor for type II membrane protein segment. The Lumenal segment spans residues 25–316 (NRFLTRSSNT…CRKSCKACSS (292 aa)). Asn96 carries N-linked (GlcNAc...) asparagine glycosylation. The 123-residue stretch at 139-261 (NGESMQILHY…KWSATRWIHV (123 aa)) folds into the Fe2OG dioxygenase domain. Fe cation-binding residues include His157 and Asp159. Asn233 carries an N-linked (GlcNAc...) asparagine glycan. His242 contacts Fe cation. Residue Lys252 coordinates 2-oxoglutarate. One can recognise a ShKT domain in the interval 274-314 (CMDENVSCEKWAKAGECQKNPTYMVGSDKDHGYCRKSCKAC). Cystine bridges form between Cys274–Cys314, Cys281–Cys307, and Cys290–Cys311. Asn278 is a glycosylation site (N-linked (GlcNAc...) asparagine).

The protein belongs to the P4HA family. Requires Fe(2+) as cofactor. The cofactor is L-ascorbate.

It localises to the endoplasmic reticulum membrane. The enzyme catalyses L-prolyl-[collagen] + 2-oxoglutarate + O2 = trans-4-hydroxy-L-prolyl-[collagen] + succinate + CO2. In terms of biological role, catalyzes the post-translational formation of 4-hydroxyproline in -Xaa-Pro-Gly- sequences in proline-rich peptide sequences of plant glycoproteins and other proteins. Hydroxyprolines are important constituent of many plant cell wall glycoproteins such as extensins, hydroxyproline-rich glycoproteins, lectins and arabinogalactan proteins. This Arabidopsis thaliana (Mouse-ear cress) protein is Probable prolyl 4-hydroxylase 7.